The sequence spans 386 residues: Ovalbumin (386 aa).

Glycine 2 is subject to N-acetylglycine. Position 69 is a phosphoserine (serine 69). Residues cysteine 74 and cysteine 121 are joined by a disulfide bond. An N-linked (GlcNAc...) asparagine glycan is attached at asparagine 293. Serine 345 carries the post-translational modification Phosphoserine.

It belongs to the serpin family. Ov-serpin subfamily. Post-translationally, the N-terminus is blocked.

It localises to the secreted. Storage protein of egg white. Lacks protease inhibitory activity. In Dromaius novaehollandiae (Emu), this protein is Ovalbumin (SERPINB14).